The sequence spans 290 residues: 4-diphosphocytidyl-2-C-methyl-D-erythritol kinase (290 aa).

Residue Lys13 is part of the active site. 96–106 contributes to the ATP binding site; it reads PMGGGIGGGSS. Residue Asp138 is part of the active site.

This sequence belongs to the GHMP kinase family. IspE subfamily.

It catalyses the reaction 4-CDP-2-C-methyl-D-erythritol + ATP = 4-CDP-2-C-methyl-D-erythritol 2-phosphate + ADP + H(+). It participates in isoprenoid biosynthesis; isopentenyl diphosphate biosynthesis via DXP pathway; isopentenyl diphosphate from 1-deoxy-D-xylulose 5-phosphate: step 3/6. Its function is as follows. Catalyzes the phosphorylation of the position 2 hydroxy group of 4-diphosphocytidyl-2C-methyl-D-erythritol. This chain is 4-diphosphocytidyl-2-C-methyl-D-erythritol kinase, found in Vibrio vulnificus (strain CMCP6).